The chain runs to 169 residues: Large ribosomal subunit protein uL15 (169 aa).

The interval 20–56 (GRGIGSGKGKTGGRGVKGQKARSGVSIKGFEGGQMPL) is disordered. Residues 21 to 35 (RGIGSGKGKTGGRGV) show a composition bias toward gly residues.

This sequence belongs to the universal ribosomal protein uL15 family. Part of the 50S ribosomal subunit.

In terms of biological role, binds to the 23S rRNA. The polypeptide is Large ribosomal subunit protein uL15 (Methylorubrum extorquens (strain CM4 / NCIMB 13688) (Methylobacterium extorquens)).